A 76-amino-acid chain; its full sequence is Frizzled-3 (76 aa).

The Cytoplasmic segment spans residues Tyr1–Pro5. The chain crosses the membrane as a helical span at residues Ile6–Leu26. Topologically, residues Glu27–Cys54 are extracellular. An N-linked (GlcNAc...) asparagine glycan is attached at Asn33. A helical transmembrane segment spans residues Thr55–Leu75. A topological domain (cytoplasmic) is located at residue Arg76.

It belongs to the G-protein coupled receptor Fz/Smo family.

It localises to the membrane. Its subcellular location is the cell membrane. It is found in the cell surface. The protein resides in the apical cell membrane. Its function is as follows. Receptor for Wnt proteins. Most of frizzled receptors are coupled to the beta-catenin canonical signaling pathway, which leads to the activation of disheveled proteins, inhibition of GSK-3 kinase, nuclear accumulation of beta-catenin and activation of Wnt target genes. A second signaling pathway involving PKC and calcium fluxes has been seen for some family members, but it is not yet clear if it represents a distinct pathway or if it can be integrated in the canonical pathway, as PKC seems to be required for Wnt-mediated inactivation of GSK-3 kinase. Both pathways seem to involve interactions with G-proteins. May be involved in transduction and intercellular transmission of polarity information during tissue morphogenesis and/or in differentiated tissues. Plays a role in controlling early axon growth and guidance processes necessary for the formation of a subset of central and peripheral major fiber tracts. Involved in the migration of cranial neural crest cells. May also be implicated in the transmission of sensory information from the trunk and limbs to the brain. Controls commissural sensory axons guidance after midline crossing along the anterior-posterior axis in the developing spinal cord in a Wnt-dependent signaling pathway. Together with FZD6, is involved in the neural tube closure and plays a role in the regulation of the establishment of planar cell polarity (PCP). Promotes neurogenesis by maintaining sympathetic neuroblasts within the cell cycle in a beta-catenin-dependent manner. This chain is Frizzled-3 (FZD3), found in Gallus gallus (Chicken).